A 1481-amino-acid chain; its full sequence is Cystic fibrosis transmembrane conductance regulator (1481 aa).

Residues 1-77 (MQRSPLEKAS…KLINALRRCF (77 aa)) are Cytoplasmic-facing. A helical transmembrane segment spans residues 78-98 (FWRFMFYGIILYLGEVTKAVQ). Residues 81 to 365 (FMFYGIILYL…WAVQTWYDSL (285 aa)) form the ABC transmembrane type-1 1 domain. The Extracellular segment spans residues 99–122 (PLLLGRIIASYDPDNEAERSIAIY). A helical transmembrane segment spans residues 123–146 (LGIGLCLLFIVRTLLLHPAIFGLH). Topologically, residues 147–195 (HIGMQMRIAMFSLIYKKTLKLSSRVLDKISIGQLVSLLSNNLNKFDEGL) are cytoplasmic. A helical transmembrane segment spans residues 196-216 (ALAHFVWIAPLQVTLLMGLLW). Residues 217–222 (DLLQAS) lie on the Extracellular side of the membrane. Residues 223–243 (AFCGLAFLIVLALFQAGLGRM) traverse the membrane as a helical segment. Topologically, residues 244 to 298 (MMKYRDQRAGKINERLVITSEMIENIQSVKAYCWEEAMEKMIENLRQTELKLTRK) are cytoplasmic. The helical transmembrane segment at 299-319 (AAYVRYFNSSAFFFSGFFVVF) threads the bilayer. Residues 320 to 339 (LSVLPYALIKGIVLRRIFTT) are Extracellular-facing. A helical membrane pass occupies residues 340–358 (ISFCIVLRMAVTRQFPWAV). Over 359 to 858 (QTWYDSLGAI…YLRYITIHKS (500 aa)) the chain is Cytoplasmic. ATP is bound by residues Trp-401, Ser-433, 457–464 (GSTGAGKT), and Gln-492. The ABC transporter 1 domain occupies 422–645 (NGDNSLFFSN…RPDFSSKLMG (224 aa)). Cys-523 carries the S-palmitoyl cysteine lipid modification. Residues Ser-548 and Ser-659 each carry the phosphoserine modification. The tract at residues 653 to 831 (SAERRNSILT…EEINEDDLKE (179 aa)) is disordered R region. Ser-669 carries the post-translational modification Phosphoserine; by PKA. Ser-685 bears the Phosphoserine mark. A Glycyl lysine isopeptide (Lys-Gly) (interchain with G-Cter in ubiquitin) cross-link involves residue Lys-687. Residues Ser-699 and Ser-711 each carry the phosphoserine modification. Thr-716 carries the phosphothreonine modification. 5 positions are modified to phosphoserine: Ser-736, Ser-767, Ser-790, Ser-795, and Ser-813. Residues 859 to 879 (LIFVLIWCLVIFLAEVAASLV) form a helical membrane-spanning segment. Residues 859 to 1155 (LIFVLIWCLV…AVNSSIDVDS (297 aa)) enclose the ABC transmembrane type-1 2 domain. Residues 880–918 (VLWLLKETPPQDSGNSTKGANNSYAVIITSTSSYYVFYI) lie on the Extracellular side of the membrane. Residues Asn-894 and Asn-900 are each glycosylated (N-linked (GlcNAc...) asparagine). The discontinuously helical transmembrane segment at 919–939 (YVGVADTLLALGLFRGLPLVH) threads the bilayer. The Cytoplasmic segment spans residues 940–990 (TLITVSKILHHKMLHSVLQAPMSTLNTLKAGGILNRFSKDMAILDDLLPLT). The helical transmembrane segment at 991 to 1011 (IFDFIQLLLIVIGAVAVVSVL) threads the bilayer. The Extracellular portion of the chain corresponds to 1012 to 1013 (QP). Residues 1014 to 1034 (YIFLATVPVIAAFIILRAYFL) traverse the membrane as a helical segment. At 1035 to 1095 (HTSQQLKQLE…TANWFLYLST (61 aa)) the chain is on the cytoplasmic side. Residues 1096-1116 (LRWFQMRIEMIFVIFFIAVTF) form a helical membrane-spanning segment. Residues 1117–1130 (ISILTTGEGEGTVG) lie on the Extracellular side of the membrane. A helical membrane pass occupies residues 1131–1151 (IILTLAMNIMSTLQWAVNSSI). The Cytoplasmic portion of the chain corresponds to 1152 to 1481 (DVDSLMRSVS…TEEEVQETRL (330 aa)). The region spanning 1211–1444 (MTVKDLTAKY…KSLFQQAISS (234 aa)) is the ABC transporter 2 domain. ATP is bound by residues Tyr-1220 and 1245-1252 (GRTGSGKS). The interaction with GORASP2 stretch occupies residues 1387–1481 (RTLKQAFADC…TEEEVQETRL (95 aa)). A lipid anchor (S-palmitoyl cysteine) is attached at Cys-1396. Residues Ser-1445 and Ser-1457 each carry the phosphoserine modification. The segment at 1449 to 1481 (KLFPHRNSSKHKSRSKIAALQEETEEEVQETRL) is disordered. Residues 1451-1463 (FPHRNSSKHKSRS) show a composition bias toward basic residues. Over residues 1470 to 1481 (EETEEEVQETRL) the composition is skewed to acidic residues. A PDZ-binding motif is present at residues 1479–1481 (TRL).

This sequence belongs to the ABC transporter superfamily. ABCC family. CFTR transporter (TC 3.A.1.202) subfamily. Monomer; does not require oligomerization for channel activity. May form oligomers in the membrane. Interacts with SLC26A3, SLC26A6 and NHERF1. Interacts with SHANK2. Interacts with MYO6. Interacts (via C-terminus) with GOPC (via PDZ domain); this promotes CFTR internalization and thereby decreases channel activity. Interacts with SLC4A7 through NHERF1. Found in a complex with MYO5B and RAB11A. Interacts with ANO1. Interacts with SLC26A8. Interacts with AHCYL1; the interaction increases CFTR activity. Interacts with CSE1L. The core-glycosylated form interacts with GORASP2 (via PDZ GRASP-type 1 domain) in respone to ER stress. Interacts with MARCHF2; the interaction leads to CFTR ubiqtuitination and degradation. Interacts with ADGRG2. Post-translationally, N-glycosylated. Phosphorylated; cAMP treatment promotes phosphorylation and activates the channel. Dephosphorylation decreases the ATPase activity (in vitro). Phosphorylation at PKA sites activates the channel. Phosphorylation at PKC sites enhances the response to phosphorylation by PKA. Phosphorylated by AMPK; this inhibits channel activity. In terms of processing, ubiquitinated, leading to its degradation in the lysosome. Deubiquitination by USP10 in early endosomes enhances its endocytic recycling to the cell membrane. Ubiquitinated by RNF185 during ER stress. Ubiquitinated by MARCHF2.

The protein localises to the apical cell membrane. It is found in the early endosome membrane. Its subcellular location is the cell membrane. It localises to the recycling endosome membrane. The protein resides in the endoplasmic reticulum membrane. The protein localises to the nucleus. The enzyme catalyses ATP + H2O + closed Cl(-) channel = ADP + phosphate + open Cl(-) channel.. It catalyses the reaction chloride(in) = chloride(out). The catalysed reaction is hydrogencarbonate(in) = hydrogencarbonate(out). It carries out the reaction ATP + H2O = ADP + phosphate + H(+). Epithelial ion channel that plays an important role in the regulation of epithelial ion and water transport and fluid homeostasis. Mediates the transport of chloride ions across the cell membrane. Possesses an intrinsic ATPase activity and utilizes ATP to gate its channel; the passive flow of anions through the channel is gated by cycles of ATP binding and hydrolysis by the ATP-binding domains. The ion channel is also permeable to HCO(3)(-); selectivity depends on the extracellular chloride concentration. Exerts its function also by modulating the activity of other ion channels and transporters. Contributes to the regulation of the pH and the ion content of the epithelial fluid layer. Modulates the activity of the epithelial sodium channel (ENaC) complex, in part by regulating the cell surface expression of the ENaC complex. May regulate bicarbonate secretion and salvage in epithelial cells by regulating the transporter SLC4A7. Can inhibit the chloride channel activity of ANO1. Plays a role in the chloride and bicarbonate homeostasis during sperm epididymal maturation and capacitation. This chain is Cystic fibrosis transmembrane conductance regulator, found in Equus caballus (Horse).